Reading from the N-terminus, the 489-residue chain is Inositol-pentakisphosphate 2-kinase (489 aa).

The short motif at Glu136–Lys140 is the EXKPK motif element.

It belongs to the IPK1 type 2 family.

The protein localises to the cytoplasm. Its subcellular location is the nucleus. It catalyses the reaction 1D-myo-inositol 1,3,4,5,6-pentakisphosphate + ATP = 1D-myo-inositol hexakisphosphate + ADP + H(+). Phosphorylates Ins(1,3,4,5,6)P5 at position 2 to form Ins(1,2,3,4,5,6)P6 (InsP6 or phytate). InsP6 is involved in many processes such as mRNA export, non-homologous end-joining, endocytosis, ion channel regulation. It also protects cells from TNF-alpha-induced apoptosis. This chain is Inositol-pentakisphosphate 2-kinase (Ippk), found in Rattus norvegicus (Rat).